A 94-amino-acid polypeptide reads, in one-letter code: Large ribosomal subunit protein uL23 (94 aa).

This sequence belongs to the universal ribosomal protein uL23 family. Part of the 50S ribosomal subunit. Contacts protein L29, and trigger factor when it is bound to the ribosome.

One of the early assembly proteins it binds 23S rRNA. One of the proteins that surrounds the polypeptide exit tunnel on the outside of the ribosome. Forms the main docking site for trigger factor binding to the ribosome. This Akkermansia muciniphila (strain ATCC BAA-835 / DSM 22959 / JCM 33894 / BCRC 81048 / CCUG 64013 / CIP 107961 / Muc) protein is Large ribosomal subunit protein uL23.